A 521-amino-acid polypeptide reads, in one-letter code: Lymphocyte activation gene 3 protein (521 aa).

The first 23 residues, 1–23 (MREDLLLGFLLLGLLWEAPVVSS), serve as a signal peptide directing secretion. At 24-442 (GPGKELPVVW…ISGDLKGGHL (419 aa)) the chain is on the extracellular side. In terms of domain architecture, Ig-like V-type spans 37 to 163 (GAPVHLPCSL…LSCSLRLRVG (127 aa)). The segment at 37–246 (GAPVHLPCSL…LTYRDGFNVS (210 aa)) is interaction with FGL1. A disulfide bond links Cys-44 and Cys-156. Ig-like C2-type domains follow at residues 165 to 246 (ASMI…FNVS), 258 to 341 (PVAP…ATVT), and 345 to 412 (ITVT…EGQR). Residue Asn-184 is glycosylated (N-linked (GlcNAc...) asparagine). A disulfide bridge connects residues Cys-185 and Cys-235. N-linked (GlcNAc...) asparagine glycosylation is found at Asn-244, Asn-309, Asn-337, and Asn-381. Cys-276 and Cys-327 are disulfide-bonded. The cysteines at positions 363 and 405 are disulfide-linked. The interval 422–442 (ESSSGAHSARRISGDLKGGHL) is connecting peptide. The chain crosses the membrane as a helical span at residues 443–463 (VLVLILGALSLFLLVAGAFGF). The Cytoplasmic portion of the chain corresponds to 464-521 (HWWRKQLLLRRFSALEHGIQPFPAQRKIEELERELETEMGQEPEPEPEPQLEPEPRQL). The short motif at 490–495 (KIEELE) is the KIEELE motif element. The tract at residues 493–518 (ELERELETEMGQEPEPEPEPQLEPEP) is 13 X 2 AA tandem repeats of E-X. Residues 493–521 (ELERELETEMGQEPEPEPEPQLEPEPRQL) form a disordered region. Acidic residues predominate over residues 500-514 (TEMGQEPEPEPEPQL).

The protein belongs to the LAG3 family. In terms of assembly, interacts with MHC class II (MHC-II); selectively recognizes stable complexes of peptide and MHC-II. Interacts with FGL1 (via the Fibrinogen C-terminal domain). In terms of processing, proteolytically cleaved by ADAM10 and ADAM17 within the connecting peptide region, leading to release of Secreted lymphocyte activation gene 3 protein (sLAG-3). ADAM10 mediates constitutive cleavage, but cleavage increases following T-cell activation, whereas shedding by ADAM17 is induced by TCR signaling in a PRKCQ-dependent manner. Primarily expressed in activated CD4(+) and CD8(+) T-cells. Also expressed in a subset of regulatory T-cells (Tregs), such as natural CD4(+)CD25(+) Tregs. Also expressed on plasmacytoid dendritic cells (pDCs).

The protein resides in the cell membrane. It is found in the secreted. Lymphocyte activation gene 3 protein: Inhibitory receptor on antigen activated T-cells. Delivers inhibitory signals upon binding to ligands, such as FGL1. FGL1 constitutes a major ligand of LAG3 and is responsible for LAG3 T-cell inhibitory function. Following TCR engagement, LAG3 associates with CD3-TCR in the immunological synapse and directly inhibits T-cell activation. May inhibit antigen-specific T-cell activation in synergy with PDCD1/PD-1, possibly by acting as a coreceptor for PDCD1/PD-1. Negatively regulates the proliferation, activation, effector function and homeostasis of both CD8(+) and CD4(+) T-cells. Also mediates immune tolerance: constitutively expressed on a subset of regulatory T-cells (Tregs) and contributes to their suppressive function. Also acts as a negative regulator of plasmacytoid dendritic cell (pDCs) activation. Binds MHC class II (MHC-II); the precise role of MHC-II-binding is however unclear. In terms of biological role, may function as a ligand for MHC class II (MHC-II) on antigen-presenting cells (APC), promoting APC activation/maturation and driving Th1 immune response. In Mus musculus (Mouse), this protein is Lymphocyte activation gene 3 protein.